The primary structure comprises 252 residues: 5-oxoprolinase subunit A (252 aa).

This sequence belongs to the LamB/PxpA family. As to quaternary structure, forms a complex composed of PxpA, PxpB and PxpC.

It carries out the reaction 5-oxo-L-proline + ATP + 2 H2O = L-glutamate + ADP + phosphate + H(+). Catalyzes the cleavage of 5-oxoproline to form L-glutamate coupled to the hydrolysis of ATP to ADP and inorganic phosphate. This chain is 5-oxoprolinase subunit A, found in Mycolicibacterium gilvum (strain PYR-GCK) (Mycobacterium gilvum (strain PYR-GCK)).